The sequence spans 556 residues: 2-isopropylmalate synthase (556 aa).

The Pyruvate carboxyltransferase domain occupies proline 33 to aspartate 307. Mg(2+) contacts are provided by aspartate 42, histidine 246, histidine 248, and asparagine 282. Positions alanine 439–alanine 556 are regulatory domain.

This sequence belongs to the alpha-IPM synthase/homocitrate synthase family. LeuA type 2 subfamily. Homodimer. The cofactor is Mg(2+).

The protein resides in the cytoplasm. The enzyme catalyses 3-methyl-2-oxobutanoate + acetyl-CoA + H2O = (2S)-2-isopropylmalate + CoA + H(+). It participates in amino-acid biosynthesis; L-leucine biosynthesis; L-leucine from 3-methyl-2-oxobutanoate: step 1/4. Functionally, catalyzes the condensation of the acetyl group of acetyl-CoA with 3-methyl-2-oxobutanoate (2-ketoisovalerate) to form 3-carboxy-3-hydroxy-4-methylpentanoate (2-isopropylmalate). This Pseudomonas aeruginosa (strain ATCC 15692 / DSM 22644 / CIP 104116 / JCM 14847 / LMG 12228 / 1C / PRS 101 / PAO1) protein is 2-isopropylmalate synthase.